The sequence spans 236 residues: Proteasome subunit alpha (236 aa).

It belongs to the peptidase T1A family. As to quaternary structure, the 20S proteasome core is composed of 14 alpha and 14 beta subunits that assemble into four stacked heptameric rings, resulting in a barrel-shaped structure. The two inner rings, each composed of seven catalytic beta subunits, are sandwiched by two outer rings, each composed of seven alpha subunits. The catalytic chamber with the active sites is on the inside of the barrel. Has a gated structure, the ends of the cylinder being occluded by the N-termini of the alpha-subunits. Is capped by the proteasome-associated ATPase, ARC.

It is found in the cytoplasm. Its pathway is protein degradation; proteasomal Pup-dependent pathway. With respect to regulation, the formation of the proteasomal ATPase ARC-20S proteasome complex, likely via the docking of the C-termini of ARC into the intersubunit pockets in the alpha-rings, may trigger opening of the gate for substrate entry. Interconversion between the open-gate and close-gate conformations leads to a dynamic regulation of the 20S proteasome proteolysis activity. Functionally, component of the proteasome core, a large protease complex with broad specificity involved in protein degradation. This chain is Proteasome subunit alpha, found in Jonesia denitrificans (strain ATCC 14870 / DSM 20603 / BCRC 15368 / CIP 55.134 / JCM 11481 / NBRC 15587 / NCTC 10816 / Prevot 55134) (Listeria denitrificans).